A 353-amino-acid chain; its full sequence is Probable dual-specificity RNA methyltransferase RlmN (353 aa).

The active-site Proton acceptor is Glu-90. The region spanning 96–326 (YKHGNSICIS…VTTRREMGSD (231 aa)) is the Radical SAM core domain. Cys-103 and Cys-331 are joined by a disulfide. [4Fe-4S] cluster contacts are provided by Cys-110, Cys-114, and Cys-117. Residues 157–158 (GE), Ser-189, 212–214 (SLH), and Asn-288 each bind S-adenosyl-L-methionine. The active-site S-methylcysteine intermediate is Cys-331.

This sequence belongs to the radical SAM superfamily. RlmN family. [4Fe-4S] cluster serves as cofactor.

It localises to the cytoplasm. It carries out the reaction adenosine(2503) in 23S rRNA + 2 reduced [2Fe-2S]-[ferredoxin] + 2 S-adenosyl-L-methionine = 2-methyladenosine(2503) in 23S rRNA + 5'-deoxyadenosine + L-methionine + 2 oxidized [2Fe-2S]-[ferredoxin] + S-adenosyl-L-homocysteine. The catalysed reaction is adenosine(37) in tRNA + 2 reduced [2Fe-2S]-[ferredoxin] + 2 S-adenosyl-L-methionine = 2-methyladenosine(37) in tRNA + 5'-deoxyadenosine + L-methionine + 2 oxidized [2Fe-2S]-[ferredoxin] + S-adenosyl-L-homocysteine. Specifically methylates position 2 of adenine 2503 in 23S rRNA and position 2 of adenine 37 in tRNAs. The chain is Probable dual-specificity RNA methyltransferase RlmN from Clostridium beijerinckii (strain ATCC 51743 / NCIMB 8052) (Clostridium acetobutylicum).